Reading from the N-terminus, the 29-residue chain is GLPVCGETCVGGTCNTPGCSCSWPVCTRN.

Positions 1–29 (GLPVCGETCVGGTCNTPGCSCSWPVCTRN) form a cross-link, cyclopeptide (Gly-Asn). Disulfide bonds link Cys5-Cys19, Cys9-Cys21, and Cys14-Cys26.

This is a cyclic peptide.

Its function is as follows. Probably participates in a plant defense mechanism. Has cytotoxic activity against a variety of drug-resistant and drug-sensitive human tumor cell lines, and against primary chronic lymphocytic leukemia cells. Has weak cytotoxic activity against primary ovarian carcinoma cells or normal lymphocytes. This Viola arvensis (European field pansy) protein is Varv peptide A.